A 204-amino-acid chain; its full sequence is 3-isopropylmalate dehydratase small subunit (204 aa).

The protein belongs to the LeuD family. LeuD type 1 subfamily. Heterodimer of LeuC and LeuD.

It carries out the reaction (2R,3S)-3-isopropylmalate = (2S)-2-isopropylmalate. The protein operates within amino-acid biosynthesis; L-leucine biosynthesis; L-leucine from 3-methyl-2-oxobutanoate: step 2/4. Functionally, catalyzes the isomerization between 2-isopropylmalate and 3-isopropylmalate, via the formation of 2-isopropylmaleate. This is 3-isopropylmalate dehydratase small subunit from Ruthia magnifica subsp. Calyptogena magnifica.